The primary structure comprises 93 residues: Co-chaperonin GroES (93 aa).

The protein belongs to the GroES chaperonin family. In terms of assembly, heptamer of 7 subunits arranged in a ring. Interacts with the chaperonin GroEL.

The protein resides in the cytoplasm. Its function is as follows. Together with the chaperonin GroEL, plays an essential role in assisting protein folding. The GroEL-GroES system forms a nano-cage that allows encapsulation of the non-native substrate proteins and provides a physical environment optimized to promote and accelerate protein folding. GroES binds to the apical surface of the GroEL ring, thereby capping the opening of the GroEL channel. This Streptococcus gordonii (strain Challis / ATCC 35105 / BCRC 15272 / CH1 / DL1 / V288) protein is Co-chaperonin GroES.